We begin with the raw amino-acid sequence, 852 residues long: MPANLSSALETFKQQRDAAEAHYLKANRVSVFFREYTAAVETLLAALWAEYFQNSALCLMAVGGFGRGELYPCSDVDLAVVSPAPLSDGIQEQIARFVQTLWDCKLMPSVKSGSVDELCESVRNDITGDTAFLEARFLFGNRQTVDKLAEKMNAQRNVAAFVEAKLVEMEHRHAKSQGSGAVLEPNIKSCPGGLRDIHTLLWIAKAQGLATDLPDLLKQRILTRAEAGMLSHGYRRLAHIRIHLHLNAKRAEDRLLFDLQPQVAESMGYEGLNLRRQSEELMRVFYRAIKTVKQLGGILTPMLQSRVSSTPLRVTLRIDDDYIQVNNQIAARHTDIFFRRPEHIFKIVEIMQQRNDITALEPQTLRAWWGATRKINRSFYQNPENRRRFAGFFRNGNGLTQTLRFLNLYGVLGRYLPAWEKIIGLLQHDLFHIYPVDDHILTVVRNVRRLALDMHSHELPYASALMQSFEKQDILYLAAFFHDIAKGRGGDHAIQGIADARQFAADHFLTGEESDLLAWLVENHLLMSAVAQKEDIQDPSVLDAFCKRVQTHERLSALYLLTISDIRGTNPKLWNAWRASLLESLFHAAGRYLTGNGGNPHTLFGRRRQEAADLLTRAAVPEKQQKKLWNALGSAYFARHQSREILWHAANLVHDFETPIVRSRILPKSDSFQVMVFMPNGPRLFARLCRIFSRHGFDILAARAFITEHDYILDTFIVQIPSQHAPEDYPDIQSALEAELNSFIHGHTVAETQSRSRRISRRSRYMPIAPSITITPEEDYPDWYSVEITAVNRPFLLADMAEVFFAHNVSLRYAKISTLDERAEDSFTVFSPDLKNPKIQSSLKQTLLEQLS.

Positions 1 to 318 (MPANLSSALE…STPLRVTLRI (318 aa)) are uridylyltransferase. Residues 319-672 (DDDYIQVNNQ…SRILPKSDSF (354 aa)) form a uridylyl-removing region. The HD domain occupies 436–558 (VDDHILTVVR…VQTHERLSAL (123 aa)). ACT domains follow at residues 673–757 (QVMV…SRSR) and 785–852 (SVEI…EQLS).

The protein belongs to the GlnD family. Requires Mg(2+) as cofactor.

The catalysed reaction is [protein-PII]-L-tyrosine + UTP = [protein-PII]-uridylyl-L-tyrosine + diphosphate. It catalyses the reaction [protein-PII]-uridylyl-L-tyrosine + H2O = [protein-PII]-L-tyrosine + UMP + H(+). Its activity is regulated as follows. Uridylyltransferase (UTase) activity is inhibited by glutamine, while glutamine activates uridylyl-removing (UR) activity. Functionally, modifies, by uridylylation and deuridylylation, the PII regulatory proteins (GlnB and homologs), in response to the nitrogen status of the cell that GlnD senses through the glutamine level. Under low glutamine levels, catalyzes the conversion of the PII proteins and UTP to PII-UMP and PPi, while under higher glutamine levels, GlnD hydrolyzes PII-UMP to PII and UMP (deuridylylation). Thus, controls uridylylation state and activity of the PII proteins, and plays an important role in the regulation of nitrogen assimilation and metabolism. This chain is Bifunctional uridylyltransferase/uridylyl-removing enzyme, found in Neisseria meningitidis serogroup B (strain ATCC BAA-335 / MC58).